The primary structure comprises 80 residues: Large ribosomal subunit protein uL24 (80 aa).

Residues 53 to 80 (HMRPTQSNPQGSIIEREFPIHASNVKKS) form a disordered region.

Belongs to the universal ribosomal protein uL24 family. As to quaternary structure, part of the 50S ribosomal subunit.

In terms of biological role, one of two assembly initiator proteins, it binds directly to the 5'-end of the 23S rRNA, where it nucleates assembly of the 50S subunit. Its function is as follows. One of the proteins that surrounds the polypeptide exit tunnel on the outside of the subunit. The polypeptide is Large ribosomal subunit protein uL24 (Chlorobium luteolum (strain DSM 273 / BCRC 81028 / 2530) (Pelodictyon luteolum)).